The primary structure comprises 256 residues: Imidazole glycerol phosphate synthase subunit HisF (256 aa).

Catalysis depends on residues Asp12 and Asp131.

It belongs to the HisA/HisF family. In terms of assembly, heterodimer of HisH and HisF.

The protein resides in the cytoplasm. The enzyme catalyses 5-[(5-phospho-1-deoxy-D-ribulos-1-ylimino)methylamino]-1-(5-phospho-beta-D-ribosyl)imidazole-4-carboxamide + L-glutamine = D-erythro-1-(imidazol-4-yl)glycerol 3-phosphate + 5-amino-1-(5-phospho-beta-D-ribosyl)imidazole-4-carboxamide + L-glutamate + H(+). Its pathway is amino-acid biosynthesis; L-histidine biosynthesis; L-histidine from 5-phospho-alpha-D-ribose 1-diphosphate: step 5/9. In terms of biological role, IGPS catalyzes the conversion of PRFAR and glutamine to IGP, AICAR and glutamate. The HisF subunit catalyzes the cyclization activity that produces IGP and AICAR from PRFAR using the ammonia provided by the HisH subunit. This Pseudomonas syringae pv. tomato (strain ATCC BAA-871 / DC3000) protein is Imidazole glycerol phosphate synthase subunit HisF.